We begin with the raw amino-acid sequence, 481 residues long: Glucokinase-1 (481 aa).

A Hexokinase domain is found at 4 to 477 (PKLTKAVDSI…SGVGAALCAL (474 aa)). The hexokinase small subdomain stretch occupies residues 64 to 204 (SGQEHGVTML…LSNVHVVALT (141 aa)). Residue Lys101 participates in ATP binding. The segment at 146-172 (KMGFTFSYPVDQTSLSSGKLIRWTKGF) is glucose-binding. Residues 205 to 466 (NDTTGTLLAR…RDVHLRISKD (262 aa)) are hexokinase large subdomain. 466–471 (DGSGVG) serves as a coordination point for ATP.

The protein belongs to the hexokinase family.

The catalysed reaction is D-glucose + ATP = D-glucose 6-phosphate + ADP + H(+). The enzyme catalyses a D-hexose + ATP = a D-hexose 6-phosphate + ADP + H(+). It carries out the reaction D-mannose + ATP = D-mannose 6-phosphate + ADP + H(+). Its pathway is carbohydrate metabolism; hexose metabolism. It functions in the pathway carbohydrate degradation; glycolysis; D-glyceraldehyde 3-phosphate and glycerone phosphate from D-glucose: step 1/4. Its function is as follows. Glukokinase specific for aldohexoses. Phosphorylates glucose and mannose, but not fructose. This is Glucokinase-1 (GLK1) from Kluyveromyces lactis (strain ATCC 8585 / CBS 2359 / DSM 70799 / NBRC 1267 / NRRL Y-1140 / WM37) (Yeast).